A 440-amino-acid chain; its full sequence is Xylose isomerase (440 aa).

Active-site residues include His-100 and Asp-103. Mg(2+) contacts are provided by Glu-231, Glu-267, His-270, Asp-295, Asp-306, Asp-308, and Asp-338.

Belongs to the xylose isomerase family. In terms of assembly, homotetramer. It depends on Mg(2+) as a cofactor.

It is found in the cytoplasm. It carries out the reaction alpha-D-xylose = alpha-D-xylulofuranose. This Burkholderia vietnamiensis (strain G4 / LMG 22486) (Burkholderia cepacia (strain R1808)) protein is Xylose isomerase.